A 326-amino-acid chain; its full sequence is L-lactate dehydrogenase (326 aa).

NAD(+)-binding positions include V20, D41, K46, Y71, and 85-86 (GA). Positions 88 and 94 each coordinate substrate. Residues S107, 124–126 (AAN), and S149 each bind NAD(+). 126–129 (NPVD) lines the substrate pocket. 154-157 (DTAR) serves as a coordination point for substrate. Residues R159, 171–174 (RSVH), and H174 contribute to the beta-D-fructose 1,6-bisphosphate site. H181 serves as the catalytic Proton acceptor. A Phosphotyrosine modification is found at Y226. T235 lines the substrate pocket.

The protein belongs to the LDH/MDH superfamily. LDH family. Homotetramer.

Its subcellular location is the cytoplasm. The catalysed reaction is (S)-lactate + NAD(+) = pyruvate + NADH + H(+). It participates in fermentation; pyruvate fermentation to lactate; (S)-lactate from pyruvate: step 1/1. Its activity is regulated as follows. Allosterically activated by fructose 1,6-bisphosphate (FBP) alone under acidic conditions, while it requires additional activation factors such as divalent cations (Mn(2+)) under neutral conditions. Under acidic conditions, Mn(2+) is an inhibitor in the absence of fructose 1,6-bisphosphate (FBP). In case of L.casei, L-LDH binds four fructose 1,6-bisphosphate (FBP) molecules per tetramer, while usual allosteric L-LDH binds only two fructose 1,6-bisphosphate (FBP) molecules per tetramer. In terms of biological role, catalyzes the conversion of lactate to pyruvate. The chain is L-lactate dehydrogenase from Lacticaseibacillus casei (Lactobacillus casei).